Here is a 42-residue protein sequence, read N- to C-terminus: uncharacterized protein (42 aa).

Residues 1–42 (MTTGKPQSFEKMRTPFPGRSKAKGPQSDIIPSAPPNTPVTEH) form a disordered region. Residues 32–42 (SAPPNTPVTEH) show a composition bias toward pro residues.

This is an uncharacterized protein from Schizosaccharomyces pombe (strain 972 / ATCC 24843) (Fission yeast).